A 638-amino-acid chain; its full sequence is Polypeptide N-acetylgalactosaminyltransferase 15 (638 aa).

The Cytoplasmic portion of the chain corresponds to 1–12 (MLPRKRPRSGRS). A helical; Signal-anchor for type II membrane protein membrane pass occupies residues 13-35 (RLQFLLLFLTLGCVLMMVILLHP). The Lumenal portion of the chain corresponds to 36–638 (PPPTLHQAVT…FDQIHPVDER (603 aa)). Positions 134-157 (KDWRTEEDGEESEEVLTPLGPDSD) are disordered. Cystine bridges form between C181–C411, C402–C481, C516–C535, C561–C574, and C602–C619. The tract at residues 190 to 299 (LPTASVILCF…PGWLEPLLSR (110 aa)) is catalytic subdomain A. Substrate contacts are provided by D231 and R260. Positions 283, 285, and 416 each coordinate Mn(2+). The tract at residues 357-419 (PVRSPVVPRE…PCSRVGHIYR (63 aa)) is catalytic subdomain B. R419 is a binding site for substrate. Positions 503 to 630 (RFSGKLHNTG…GKTSQLWRFD (128 aa)) constitute a Ricin B-type lectin domain. N-linked (GlcNAc...) asparagine glycosylation occurs at N573.

It belongs to the glycosyltransferase 2 family. GalNAc-T subfamily. Mn(2+) serves as cofactor. As to expression, specifically expressed in testis.

It is found in the golgi apparatus membrane. The enzyme catalyses L-seryl-[protein] + UDP-N-acetyl-alpha-D-galactosamine = a 3-O-[N-acetyl-alpha-D-galactosaminyl]-L-seryl-[protein] + UDP + H(+). It catalyses the reaction L-threonyl-[protein] + UDP-N-acetyl-alpha-D-galactosamine = a 3-O-[N-acetyl-alpha-D-galactosaminyl]-L-threonyl-[protein] + UDP + H(+). It participates in protein modification; protein glycosylation. In terms of biological role, catalyzes the initial reaction in O-linked oligosaccharide biosynthesis, the transfer of an N-acetyl-D-galactosamine residue to a serine or threonine residue on the protein receptor. Although it displays a much weaker activity toward all substrates tested compared to GALNT2, it is able to transfer up to seven GalNAc residues to the Muc5AC peptide, suggesting that it can fill vicinal Thr/Ser residues in cooperation with other GALNT proteins. Prefers Muc1a as substrate. This Mus musculus (Mouse) protein is Polypeptide N-acetylgalactosaminyltransferase 15 (Galnt15).